The following is a 304-amino-acid chain: MHLLTLENLERKDIENILNDAIYFKKNRKSENILKEKTVALIFESPSTRTRISFDIAVNELGGHSLTLNTGETHVSKKESTKDTAKVLSRFVDVIVARVKEHSTLEDFTKYGNVPVINALSDLSHPCQILADLLTIKEHKNKLSGLKFAYFGDGNNVCNSLILGCAIMGMDIFVATPEGYEPNEKFVKMAQQIIDKQGEGSITITDDAIICAKDADVLYTDVWVSMSDKNKNIDEVLKIFPPYQINEKLLSYAKKDAIVMHCLPANRGMEITDEVIDGEQSVVYDEAENRLHAQKAVFKYIFSK.

Carbamoyl phosphate contacts are provided by residues 47–50 (STRT), arginine 98, and 125–128 (HPCQ). L-ornithine contacts are provided by residues asparagine 156, aspartate 221, and 225 to 226 (SM). Residues 262-263 (CL) and arginine 290 each bind carbamoyl phosphate.

Belongs to the aspartate/ornithine carbamoyltransferase superfamily. OTCase family.

It is found in the cytoplasm. It carries out the reaction carbamoyl phosphate + L-ornithine = L-citrulline + phosphate + H(+). Its pathway is amino-acid biosynthesis; L-arginine biosynthesis; L-arginine from L-ornithine and carbamoyl phosphate: step 1/3. Functionally, reversibly catalyzes the transfer of the carbamoyl group from carbamoyl phosphate (CP) to the N(epsilon) atom of ornithine (ORN) to produce L-citrulline. This Methanococcus aeolicus (strain ATCC BAA-1280 / DSM 17508 / OCM 812 / Nankai-3) protein is Ornithine carbamoyltransferase.